Here is a 630-residue protein sequence, read N- to C-terminus: MALSSVEPTEAPRATGFGALTLGSIGVVFGDIGTSPLYAFREAVHVAAEGAPVTRVIVLGVLSLILWSLLIVVTAKYVLLLLRADNNGEGGTLSLMALGQRALGRRSVPLLVLGVIGASMFIGDSMITPAISVLSAVEGLKIAAPALQHYVVPLTVGILVALFAFQRWGTAKVASAFGPVMVLWFSTLAVLGLLHINDDPSVIAAINPWYAVEFMLSHGVIALVTIGAVFLAVTGGEALYADLGHFGRKPIQAGWLFFVLPSLLLNYFGQGAMVLAHPDAVENTFYRMVPENLLVPMILLATAATVIASQAVITGAFSLISQAVQLGLLPRFEVRYTSETHAGQIYLPRVNMLLLAGVLLLVLLFHSSSALAAAYGIAVSTTMVVDGVMGFVVVWKLWGWRPAAAAALIIPFVAVDAIFFSANLLKLMEGAWVPLLFGFLMAMLVWTWRRGSAMLILKTRRTEVPLPDLIRSLEKRPPHIVRGTAVFLTSDPEYVPSALLHNLKHNKVLHEHNVILTIETAQTPRVDLADRVRMESLGDKFARVRLRFGFMESPNVPKALVIARKLGWQFDIMSTSFFVSRRSLKPAAQSGMPRWQNGLFIALSRSANDATDYFQIPTGRVVEVGTQVTI.

A run of 12 helical transmembrane segments spans residues 14-34 (ATGF…DIGT), 56-76 (VIVL…VTAK), 108-128 (VPLL…SMIT), 145-165 (PALQ…LFAF), 176-196 (AFGP…LLHI), 214-234 (FMLS…LAVT), 255-275 (WLFF…AMVL), 293-313 (LLVP…QAVI), 352-372 (MLLL…SALA), 375-395 (YGIA…VVVW), 402-422 (PAAA…FFSA), and 427-447 (LMEG…LVWT).

It belongs to the HAK/KUP transporter (TC 2.A.72) family.

It localises to the cell inner membrane. The catalysed reaction is K(+)(in) + H(+)(in) = K(+)(out) + H(+)(out). In terms of biological role, transport of potassium into the cell. Likely operates as a K(+):H(+) symporter. In Rhodopseudomonas palustris (strain BisA53), this protein is Probable potassium transport system protein Kup 2.